Consider the following 258-residue polypeptide: Small ribosomal subunit protein uS2 (258 aa).

The protein belongs to the universal ribosomal protein uS2 family.

The chain is Small ribosomal subunit protein uS2 from Streptococcus suis (strain 98HAH33).